Here is a 436-residue protein sequence, read N- to C-terminus: Histidine--tRNA ligase (436 aa).

It belongs to the class-II aminoacyl-tRNA synthetase family. As to quaternary structure, homodimer.

Its subcellular location is the cytoplasm. The catalysed reaction is tRNA(His) + L-histidine + ATP = L-histidyl-tRNA(His) + AMP + diphosphate + H(+). In Psychrobacter sp. (strain PRwf-1), this protein is Histidine--tRNA ligase.